We begin with the raw amino-acid sequence, 293 residues long: 5'-3' exoribonuclease Rnm (293 aa).

Mn(2+)-binding residues include His-17, His-19, Asp-24, His-49, Glu-76, His-87, His-202, Asp-259, and His-261.

It belongs to the PHP family. TrpH/YciV subfamily. The cofactor is Mn(2+).

The enzyme catalyses a ribonucleoside 3',5'-bisphosphate + H2O = a ribonucleoside 5'-phosphate + phosphate. In terms of biological role, exoribonuclease that catalyzes the last steps of 5S, 16S and 23S rRNA 5'-end maturation. Removes 3 nucleotides (nt) from the 5' end of 5S, 16S and 23S rRNA precursors to generate the mature 5' ends. 5S and 23S rRNA maturation occurs more efficiently and accurately on ribosomal particles as compared to free RNA. Efficiently catalyzes the hydrolysis of the 3'-phosphate from 3',5'-bis-phosphonucleotides as well as the successive hydrolysis of 5'-phosphomononucleotides from the 5'-end of short pieces of RNA and DNA, with no specificity toward the identity of the nucleotide base. Is more efficient at hydrolyzing RNA oligonucleotides than DNA oligonucleotides. This enzyme can also hydrolyze annealed DNA duplexes, albeit at a catalytic efficiency lower than that of the corresponding single-stranded oligonucleotides. This is 5'-3' exoribonuclease Rnm from Salmonella typhimurium (strain LT2 / SGSC1412 / ATCC 700720).